The sequence spans 520 residues: 2-isopropylmalate synthase (520 aa).

The Pyruvate carboxyltransferase domain occupies 5-267 (VIIFDTTLRD…HTNINHQEIY (263 aa)). Residues Asp14, His202, His204, and Asn238 each contribute to the Mn(2+) site. Residues 392–520 (RLDYFSVQSG…RLQQNNQEMV (129 aa)) are regulatory domain.

It belongs to the alpha-IPM synthase/homocitrate synthase family. LeuA type 1 subfamily. As to quaternary structure, homodimer. Mn(2+) serves as cofactor.

Its subcellular location is the cytoplasm. The catalysed reaction is 3-methyl-2-oxobutanoate + acetyl-CoA + H2O = (2S)-2-isopropylmalate + CoA + H(+). Its pathway is amino-acid biosynthesis; L-leucine biosynthesis; L-leucine from 3-methyl-2-oxobutanoate: step 1/4. In terms of biological role, catalyzes the condensation of the acetyl group of acetyl-CoA with 3-methyl-2-oxobutanoate (2-ketoisovalerate) to form 3-carboxy-3-hydroxy-4-methylpentanoate (2-isopropylmalate). This Yersinia pseudotuberculosis serotype O:1b (strain IP 31758) protein is 2-isopropylmalate synthase.